The chain runs to 240 residues: Pyridoxine 5'-phosphate synthase (240 aa).

3-amino-2-oxopropyl phosphate is bound at residue Asn7. 9-10 is a binding site for 1-deoxy-D-xylulose 5-phosphate; sequence DH. Arg18 contacts 3-amino-2-oxopropyl phosphate. His43 functions as the Proton acceptor in the catalytic mechanism. Residues Arg45 and His50 each contribute to the 1-deoxy-D-xylulose 5-phosphate site. Glu70 (proton acceptor) is an active-site residue. Thr100 lines the 1-deoxy-D-xylulose 5-phosphate pocket. The active-site Proton donor is His191. 3-amino-2-oxopropyl phosphate is bound by residues Gly192 and 213–214; that span reads GH.

Belongs to the PNP synthase family. As to quaternary structure, homooctamer; tetramer of dimers.

The protein localises to the cytoplasm. It carries out the reaction 3-amino-2-oxopropyl phosphate + 1-deoxy-D-xylulose 5-phosphate = pyridoxine 5'-phosphate + phosphate + 2 H2O + H(+). It functions in the pathway cofactor biosynthesis; pyridoxine 5'-phosphate biosynthesis; pyridoxine 5'-phosphate from D-erythrose 4-phosphate: step 5/5. Its function is as follows. Catalyzes the complicated ring closure reaction between the two acyclic compounds 1-deoxy-D-xylulose-5-phosphate (DXP) and 3-amino-2-oxopropyl phosphate (1-amino-acetone-3-phosphate or AAP) to form pyridoxine 5'-phosphate (PNP) and inorganic phosphate. This chain is Pyridoxine 5'-phosphate synthase, found in Gloeothece citriformis (strain PCC 7424) (Cyanothece sp. (strain PCC 7424)).